Consider the following 278-residue polypeptide: Large ribosomal subunit protein uL2 (278 aa).

The disordered stretch occupies residues 223-278; that stretch reads GSVMNPNDHPHGGGEGKAPIGHPSPMSPWGKKTLGKKTRDHKAKSEKFIVRHRRAK. Positions 255–264 are enriched in basic residues; it reads TLGKKTRDHK.

Belongs to the universal ribosomal protein uL2 family. Part of the 50S ribosomal subunit. Forms a bridge to the 30S subunit in the 70S ribosome.

Functionally, one of the primary rRNA binding proteins. Required for association of the 30S and 50S subunits to form the 70S ribosome, for tRNA binding and peptide bond formation. It has been suggested to have peptidyltransferase activity; this is somewhat controversial. Makes several contacts with the 16S rRNA in the 70S ribosome. This chain is Large ribosomal subunit protein uL2, found in Lacticaseibacillus paracasei (strain ATCC 334 / BCRC 17002 / CCUG 31169 / CIP 107868 / KCTC 3260 / NRRL B-441) (Lactobacillus paracasei).